Reading from the N-terminus, the 334-residue chain is Adenosine deaminase (334 aa).

Residues H12 and H14 each contribute to the Zn(2+) site. The substrate site is built by H14, D16, and G170. H197 contacts Zn(2+). The Proton donor role is filled by E200. D278 lines the Zn(2+) pocket. D279 contacts substrate.

The protein belongs to the metallo-dependent hydrolases superfamily. Adenosine and AMP deaminases family. Adenosine deaminase subfamily. The cofactor is Zn(2+).

It catalyses the reaction adenosine + H2O + H(+) = inosine + NH4(+). The catalysed reaction is 2'-deoxyadenosine + H2O + H(+) = 2'-deoxyinosine + NH4(+). Functionally, catalyzes the hydrolytic deamination of adenosine and 2-deoxyadenosine. The protein is Adenosine deaminase of Yersinia pseudotuberculosis serotype O:1b (strain IP 31758).